The chain runs to 666 residues: UvrABC system protein B (666 aa).

Residues Asp-26 to Thr-414 form the Helicase ATP-binding domain. An ATP-binding site is contributed by Gly-39–Thr-46. A Beta-hairpin motif is present at residues Tyr-92–Ile-115. Residues Gln-429 to Val-591 enclose the Helicase C-terminal domain. Residues Glu-625–Glu-660 enclose the UVR domain.

Belongs to the UvrB family. Forms a heterotetramer with UvrA during the search for lesions. Interacts with UvrC in an incision complex.

Its subcellular location is the cytoplasm. Its function is as follows. The UvrABC repair system catalyzes the recognition and processing of DNA lesions. A damage recognition complex composed of 2 UvrA and 2 UvrB subunits scans DNA for abnormalities. Upon binding of the UvrA(2)B(2) complex to a putative damaged site, the DNA wraps around one UvrB monomer. DNA wrap is dependent on ATP binding by UvrB and probably causes local melting of the DNA helix, facilitating insertion of UvrB beta-hairpin between the DNA strands. Then UvrB probes one DNA strand for the presence of a lesion. If a lesion is found the UvrA subunits dissociate and the UvrB-DNA preincision complex is formed. This complex is subsequently bound by UvrC and the second UvrB is released. If no lesion is found, the DNA wraps around the other UvrB subunit that will check the other stand for damage. The protein is UvrABC system protein B of Leptospira interrogans serogroup Icterohaemorrhagiae serovar copenhageni (strain Fiocruz L1-130).